A 346-amino-acid chain; its full sequence is MLHSNIYNLQAEATNKILSSSSLEELESIKLYYFGKSGTITACLKSIATISNIEERKSVGSSVNAICAELKSLINSQKEKLHKIQINAQLMQDRVDISLPVRPKQIAKLHPISKTLHEVRHIFSSLGFKLSDGPELEDEFHVFDALNTHKNHPAREENDTFYLKTLVNQKRVVLRTHTSSVQIRVMQANKGNYPIKIIAPGKVYRNDWDATHSPMFHQIEGLYIDKNVNMGHLKYCIHYFLKKFFGENIQIRFRNSYFPFTEPSAEVDIKCGEKDWIEILGCGMVHRNVLTNVNIDPDQYSGFAFGIGIERVAMLKYNISDLRKFYSNKLQWLNHYGFCFTHLVSC.

Mg(2+) is bound at residue glutamate 262.

Belongs to the class-II aminoacyl-tRNA synthetase family. Phe-tRNA synthetase alpha subunit type 1 subfamily. As to quaternary structure, tetramer of two alpha and two beta subunits. It depends on Mg(2+) as a cofactor.

The protein resides in the cytoplasm. It carries out the reaction tRNA(Phe) + L-phenylalanine + ATP = L-phenylalanyl-tRNA(Phe) + AMP + diphosphate + H(+). The protein is Phenylalanine--tRNA ligase alpha subunit of Ehrlichia chaffeensis (strain ATCC CRL-10679 / Arkansas).